Consider the following 321-residue polypeptide: MKFGIEFVPNEPIEKIVKLVKLAEDVGFEYAWITDHYNNKNVYETLALIAEGTETIKLGPGVTNPYVRSPAITASAIATLDELSNGRATLGIGPGDKATFDALGIEWVKPVSTIRDAIAMMRTLLAGEKTESGAQLMGVKAVQEKIPIYMGAQGPMMLKTAGEISDGALINASNPKDFEAAVPLIKEGAESAGKSLSDIDVAAYTCCSIDEDSAAAANAAKIVVAFIAAGSPPPVFERHGLPADTGAKFGELLGKGDFGGAIGAVDDALMEAFSVVGTPDEFIPKIEALGEMGVTQYVAGSPIGPDKEKSIKLLGEVIASF.

This sequence belongs to the mer family.

The protein localises to the cytoplasm. It catalyses the reaction 5-methyl-5,6,7,8-tetrahydromethanopterin + oxidized coenzyme F420-(gamma-L-Glu)(n) + H(+) = 5,10-methylenetetrahydromethanopterin + reduced coenzyme F420-(gamma-L-Glu)(n). It participates in one-carbon metabolism; methanogenesis from CO(2); methyl-coenzyme M from 5,10-methylene-5,6,7,8-tetrahydromethanopterin: step 1/2. Catalyzes the reversible reduction of methylene-H(4)MPT to methyl-H(4)MPT. This is 5,10-methylenetetrahydromethanopterin reductase from Methanothermobacter thermautotrophicus (strain ATCC 29096 / DSM 1053 / JCM 10044 / NBRC 100330 / Delta H) (Methanobacterium thermoautotrophicum).